A 128-amino-acid polypeptide reads, in one-letter code: Large ribosomal subunit protein mL51 (128 aa).

The transit peptide at 1 to 31 (MAGSLSWVAGRRLWGLVPLACRSFFLGVPRL) directs the protein to the mitochondrion.

It belongs to the mitochondrion-specific ribosomal protein mL51 family. Component of the mitochondrial ribosome large subunit (39S) which comprises a 16S rRNA and about 50 distinct proteins. Interacts with OXA1L.

It localises to the mitochondrion. This is Large ribosomal subunit protein mL51 (MRPL51) from Bos taurus (Bovine).